The following is an 810-amino-acid chain: Phenylalanine--tRNA ligase beta subunit (810 aa).

In terms of domain architecture, tRNA-binding spans 39-150 (RSWAAGVVLG…LDLPSGSPVG (112 aa)). In terms of domain architecture, B5 spans 407 to 495 (RGEAIINLRL…RLYGYDHFCE (89 aa)). Mg(2+) contacts are provided by D473, D479, E482, and E483. Residues 716–809 (SPYPAVARDL…LTKQFAVSLR (94 aa)) form the FDX-ACB domain.

Belongs to the phenylalanyl-tRNA synthetase beta subunit family. Type 1 subfamily. As to quaternary structure, tetramer of two alpha and two beta subunits. Mg(2+) is required as a cofactor.

The protein resides in the cytoplasm. The enzyme catalyses tRNA(Phe) + L-phenylalanine + ATP = L-phenylalanyl-tRNA(Phe) + AMP + diphosphate + H(+). This Synechocystis sp. (strain ATCC 27184 / PCC 6803 / Kazusa) protein is Phenylalanine--tRNA ligase beta subunit (pheT).